A 145-amino-acid polypeptide reads, in one-letter code: Large ribosomal subunit protein bL9 (145 aa).

It belongs to the bacterial ribosomal protein bL9 family.

Binds to the 23S rRNA. This chain is Large ribosomal subunit protein bL9, found in Ureaplasma parvum serovar 3 (strain ATCC 700970).